The primary structure comprises 533 residues: Flavin-containing monooxygenase 5 (533 aa).

A Dimethylated arginine modification is found at arginine 5. FAD-binding positions include 10–14 (GAGAS), glutamate 33, and 41–42 (LW). Serine 54 carries the post-translational modification Phosphoserine. The residue at position 56 (tyrosine 56) is a Phosphotyrosine. Residue serine 58 is modified to Phosphoserine. 62-63 (NT) contributes to the FAD binding site. 196-199 (SGGD) lines the NADP(+) pocket. At serine 280 the chain carries Phosphoserine. A Phosphothreonine modification is found at threonine 284. Serine 401 carries the phosphoserine modification. A helical transmembrane segment spans residues 513 to 533 (MMTMGKFMLAIAFLAIAVVYF).

The protein belongs to the FMO family. The cofactor is FAD. In terms of tissue distribution, kidney and liver.

The protein resides in the microsome membrane. Its subcellular location is the endoplasmic reticulum membrane. It carries out the reaction N,N-dimethylaniline + NADPH + O2 + H(+) = N,N-dimethylaniline N-oxide + NADP(+) + H2O. The catalysed reaction is NADPH + O2 + H(+) = H2O2 + NADP(+). It catalyses the reaction heptan-2-one + NADPH + O2 + H(+) = pentyl acetate + NADP(+) + H2O. The enzyme catalyses octan-3-one + NADPH + O2 + H(+) = pentyl propanoate + NADP(+) + H2O. It carries out the reaction octan-3-one + NADPH + O2 + H(+) = ethyl hexanoate + NADP(+) + H2O. The catalysed reaction is hexan-3-one + NADPH + O2 + H(+) = ethyl butanoate + NADP(+) + H2O. It catalyses the reaction hexan-3-one + NADPH + O2 + H(+) = propyl propanoate + NADP(+) + H2O. The enzyme catalyses heptan-4-one + NADPH + O2 + H(+) = propyl butanoate + NADP(+) + H2O. It carries out the reaction (2E)-geranial + NADPH + O2 + H(+) = (1E)-2,6-dimethylhepta-1,5-dien-1-yl formate + NADP(+) + H2O. The catalysed reaction is sulcatone + NADPH + O2 + H(+) = 4-methylpent-3-en-1-yl acetate + NADP(+) + H2O. In terms of biological role, acts as a Baeyer-Villiger monooxygenase on a broad range of substrates. Catalyzes the insertion of an oxygen atom into a carbon-carbon bond adjacent to a carbonyl, which converts ketones to esters. Active on diverse carbonyl compounds, whereas soft nucleophiles are mostly non- or poorly reactive. In contrast with other forms of FMO it is non- or poorly active on 'classical' substrates such as drugs, pesticides, and dietary components containing soft nucleophilic heteroatoms. Able to oxidize drug molecules bearing a carbonyl group on an aliphatic chain, such as nabumetone and pentoxifylline. Also, in the absence of substrates, shows slow but yet significant NADPH oxidase activity. Acts as a positive modulator of cholesterol biosynthesis as well as glucose homeostasis, promoting metabolic aging via pleiotropic effects. In Oryctolagus cuniculus (Rabbit), this protein is Flavin-containing monooxygenase 5 (FMO5).